Reading from the N-terminus, the 590-residue chain is Suprabasin (590 aa).

A signal peptide spans 1–25 (MHLARLVGSCSLLLLLGALSGWAAS). 4 disordered regions span residues 182–213 (GNEA…AHHG), 242–266 (FGQG…GVHH), 297–338 (GQGA…GVHH), and 545–570 (LNGN…SGAS). Composition is skewed to low complexity over residues 190–200 (QGVHHAAGQAG), 243–254 (GQGAHHAAGQAG), 297–330 (GQGA…NEAG), and 546–559 (NGNH…HQGG). Residues 560–570 (ATTTPLASGAS) are compositionally biased toward polar residues.

Detected in thymus, uterus and esophagus.

The protein localises to the secreted. The protein is Suprabasin (SBSN) of Homo sapiens (Human).